The following is an 89-amino-acid chain: cAMP-regulated phosphoprotein 21 (89 aa).

A disordered region spans residues 1-89 (MSEQGDLNQA…GGESLQDQTL (89 aa)). N-acetylserine is present on serine 2. Positions 9-25 (QAIAEEGGTEQETATPE) are enriched in low complexity. Serine 33 carries the post-translational modification Phosphoserine. Basic and acidic residues predominate over residues 40–53 (LELQRRLEAQNQER). Position 56 is a phosphoserine (serine 56).

Interacts with CALM1. Post-translationally, phosphorylation at Ser-56 favors interaction with CALM1.

The protein localises to the cytoplasm. In terms of biological role, may act as a competitive inhibitor of calmodulin-dependent enzymes such as calcineurin in neurons. The polypeptide is cAMP-regulated phosphoprotein 21 (ARPP21) (Pongo abelii (Sumatran orangutan)).